The primary structure comprises 747 residues: Myotubularin-related protein 12 (747 aa).

The span at methionine 1 to lysine 14 shows a compositional bias: gly residues. The segment at methionine 1–valine 21 is disordered. The 439-residue stretch at phenylalanine 205–tyrosine 643 folds into the Myotubularin phosphatase domain. Residues valine 449–lysine 558 are interaction with MTM1. Serine 564, serine 601, and serine 716 each carry phosphoserine.

Belongs to the protein-tyrosine phosphatase family. Non-receptor class myotubularin subfamily. Heterodimer with lipid phosphatase MTM1. Heterodimer with lipid phosphatase MTMR2.

Its subcellular location is the cytoplasm. It localises to the sarcoplasmic reticulum. It is found in the myofibril. The protein localises to the sarcomere. Functionally, acts as an adapter for the myotubularin-related phosphatases. Regulates phosphatase MTM1 protein stability and possibly its intracellular location. By stabilizing MTM1 protein levels, required for skeletal muscle maintenance but not for myogenesis. The protein is Myotubularin-related protein 12 (MTMR12) of Pongo abelii (Sumatran orangutan).